A 412-amino-acid chain; its full sequence is MTTTTTKAIILVGGPSKGTRFRPLSLDVPKLLFPIAGKPMIYHHIEACSKVENMKEIILIGFFQESVLSKFISETSKQLNVAIRYINEEKVLGTAGGLYHFRDIILEGGPSEIFVLHSDICCAFPLNDLLQFHKQHGRSCTIMGTEIESAYANQYGCLVRDEKTAELLHYAEKPETFVSNLINCGVYCFSPQFFDVIGKTMIDLKTSGQNITTDYPEITRKGFDVERLRLEQDIFVPLAGTGFISVYPYVGFWRQIKNAGSSVYCQELYLNHFAKTKPEVLKKGNNIIGNVIIDSTASVDPSAIIGPDVYIGPNVKIGKGVRVIHSIILDQTEIKDHACIIYSIIGWQSLIGVWARIEGIPNYTPFLYSQDKRRGVTIFGAGAQANGEIIVSNCIVMPHKQLDRNYNNEIIL.

A substrate-binding domain region spans residues T6–A259. Residues E88 and Q255 each coordinate GDP-alpha-D-mannose. The tract at residues L281 to L412 is hexapeptide repeat domain.

The protein belongs to the transferase hexapeptide repeat family. In terms of assembly, component of the GMPPA-GMPPB mannose-1-phosphate guanylyltransferase complex composed of 4 gmppA subunits and 8 gmppB subunits; the complex is organized into three layers, a central layer made up of 2 gmppA dimers sandwiched between two layers each made up of 2 gmppB dimers.

In terms of biological role, regulatory subunit of the GMPPA-GMPPB mannose-1-phosphate guanylyltransferase complex; reduces the catalytic activity of GMPPB when part of the complex. Mediates allosteric feedback inhibition of GMPPB catalytic activity upon binding GDP-alpha-D-mannose. Together with GMPPB regulates GDP-alpha-D-mannose levels. This chain is Mannose-1-phosphate guanylyltransferase regulatory subunit alpha (gmppA), found in Dictyostelium discoideum (Social amoeba).